Reading from the N-terminus, the 100-residue chain is uncharacterized protein (100 aa).

The helical transmembrane segment at 62–82 (IPIVIIVSIFILLIIGSISLY) threads the bilayer.

The protein resides in the membrane. This is an uncharacterized protein from Dictyostelium discoideum (Social amoeba).